The sequence spans 1213 residues: DNA-directed RNA polymerase subunit beta' (1213 aa).

Zn(2+) contacts are provided by C60, C62, C75, and C78. D450, D452, and D454 together coordinate Mg(2+). Residues C819, C893, C900, and C903 each contribute to the Zn(2+) site.

Belongs to the RNA polymerase beta' chain family. As to quaternary structure, the RNAP catalytic core consists of 2 alpha, 1 beta, 1 beta' and 1 omega subunit. When a sigma factor is associated with the core the holoenzyme is formed, which can initiate transcription. Mg(2+) is required as a cofactor. Zn(2+) serves as cofactor.

The enzyme catalyses RNA(n) + a ribonucleoside 5'-triphosphate = RNA(n+1) + diphosphate. Its function is as follows. DNA-dependent RNA polymerase catalyzes the transcription of DNA into RNA using the four ribonucleoside triphosphates as substrates. The polypeptide is DNA-directed RNA polymerase subunit beta' (Streptococcus pyogenes serotype M18 (strain MGAS8232)).